Reading from the N-terminus, the 118-residue chain is Large ribosomal subunit protein uL18 (118 aa).

The segment covering 1-10 has biased composition (basic and acidic residues); the sequence is MKTTRRDATR. The disordered stretch occupies residues 1-20; that stretch reads MKTTRRDATRSRHQRVRRKV. Residues 11–20 are compositionally biased toward basic residues; it reads SRHQRVRRKV.

This sequence belongs to the universal ribosomal protein uL18 family. Part of the 50S ribosomal subunit; part of the 5S rRNA/L5/L18/L25 subcomplex. Contacts the 5S and 23S rRNAs.

In terms of biological role, this is one of the proteins that bind and probably mediate the attachment of the 5S RNA into the large ribosomal subunit, where it forms part of the central protuberance. The chain is Large ribosomal subunit protein uL18 from Acaryochloris marina (strain MBIC 11017).